The primary structure comprises 401 residues: Beta-lactamase (401 aa).

The N-terminal stretch at 1-39 (MKLFTSTLTAKKSSTHKPLISLALSVLISTLLISETAQA) is a signal peptide. Ser-102 (acyl-ester intermediate) is an active-site residue. Residue Tyr-188 is the Proton acceptor of the active site. Position 353-355 (353-355 (KTG)) interacts with substrate.

It belongs to the class-C beta-lactamase family.

It is found in the secreted. It carries out the reaction a beta-lactam + H2O = a substituted beta-amino acid. In terms of biological role, this protein is a serine beta-lactamase with a substrate specificity for cephalosporins. This Psychrobacter immobilis protein is Beta-lactamase (ampC).